Here is a 202-residue protein sequence, read N- to C-terminus: Probable GTP-binding protein EngB (202 aa).

An EngB-type G domain is found at asparagine 30–serine 201. GTP contacts are provided by residues glycine 38–serine 45, glycine 65–serine 69, aspartate 84–glycine 87, threonine 151–aspartate 154, and valine 180–serine 182. Mg(2+) is bound by residues serine 45 and threonine 67.

This sequence belongs to the TRAFAC class TrmE-Era-EngA-EngB-Septin-like GTPase superfamily. EngB GTPase family. The cofactor is Mg(2+).

Its function is as follows. Necessary for normal cell division and for the maintenance of normal septation. In Lawsonia intracellularis (strain PHE/MN1-00), this protein is Probable GTP-binding protein EngB.